Reading from the N-terminus, the 606-residue chain is Leucine-rich repeat and immunoglobulin-like domain-containing nogo receptor-interacting protein 2 (606 aa).

The first 27 residues, 1–27, serve as a signal peptide directing secretion; sequence MLHTAIPCWQPFLGLAVVLLLMGSTIG. An LRRNT domain is found at 28–57; it reads CPARCECSAQNKSVSCHRRRLLAIPEGIPI. The Extracellular segment spans residues 28-545; the sequence is CPARCECSAQ…LDLKTILVST (518 aa). Residue Asn38 is glycosylated (N-linked (GlcNAc...) asparagine). 12 LRR repeats span residues 58–79, 82–103, 106–127, 130–151, 154–175, 178–199, 202–223, 226–247, 250–271, 274–295, 298–319, and 322–343; these read ETKI…EFIS, LLEE…AFNN, NLRS…VFTG, NLTK…MFQD, NLKS…AFSG, SLEQ…ALSH, SLIA…AFKR, HLKN…NSLY, NLTS…AFKH, YLTH…MFSD, RLQE…SFQG, and FLRV…VFSS. Residue Asn130 is glycosylated (N-linked (GlcNAc...) asparagine). N-linked (GlcNAc...) asparagine glycosylation is present at Asn188. N-linked (GlcNAc...) asparagine glycosylation is found at Asn250, Asn260, and Asn279. A glycan (N-linked (GlcNAc...) asparagine) is linked at Asn327. Positions 355 to 409 constitute an LRRCT domain; it reads NPLACDCRLLWLLQRQPNLQFGGQQPMCAGPDTIRERSFKDFHSTALSFYFTCKK. Cys432 and Cys483 form a disulfide bridge. 3 N-linked (GlcNAc...) asparagine glycosylation sites follow: Asn491, Asn522, and Asn527. A helical membrane pass occupies residues 546–566; the sequence is AMGCFTFLGVVLFCFLLLFVW. Residues 567–606 lie on the Cytoplasmic side of the membrane; the sequence is SRGKGKHKNSIDLEYVPRKNNGAVVEGEVAGPRRFNMKMI.

Its subcellular location is the membrane. The chain is Leucine-rich repeat and immunoglobulin-like domain-containing nogo receptor-interacting protein 2 (Lingo2) from Mus musculus (Mouse).